The chain runs to 473 residues: Ribulose bisphosphate carboxylase large chain (473 aa).

Asn-116 and Thr-166 together coordinate substrate. Lys-168 serves as the catalytic Proton acceptor. Lys-170 lines the substrate pocket. Lys-194, Asp-196, and Glu-197 together coordinate Mg(2+). Lys-194 is subject to N6-carboxylysine. His-287 serves as the catalytic Proton acceptor. The substrate site is built by Arg-288, His-320, and Ser-372.

This sequence belongs to the RuBisCO large chain family. Type I subfamily. Heterohexadecamer of 8 large chains and 8 small chains. Requires Mg(2+) as cofactor.

The catalysed reaction is 2 (2R)-3-phosphoglycerate + 2 H(+) = D-ribulose 1,5-bisphosphate + CO2 + H2O. It catalyses the reaction D-ribulose 1,5-bisphosphate + O2 = 2-phosphoglycolate + (2R)-3-phosphoglycerate + 2 H(+). Its function is as follows. RuBisCO catalyzes two reactions: the carboxylation of D-ribulose 1,5-bisphosphate, the primary event in carbon dioxide fixation, as well as the oxidative fragmentation of the pentose substrate. Both reactions occur simultaneously and in competition at the same active site. The protein is Ribulose bisphosphate carboxylase large chain of Nitrosomonas sp. (strain ENI-11).